A 349-amino-acid polypeptide reads, in one-letter code: Homeobox-leucine zipper protein HOX7 (349 aa).

The tract at residues 42-186 (RATRRDEQDD…PKQKSDLANR (145 aa)) is disordered. Composition is skewed to polar residues over residues 89-99 (SAETGSANSEM) and 121-135 (SSPS…RQQV). Residues 150 to 209 (GARKKLRLSKEQSSFLEDSFKEHSTLTPKQKSDLANRLNLRPRQVEVWFQNRRARTKLKQ) constitute a DNA-binding region (homeobox). Residues 167-183 (DSFKEHSTLTPKQKSDL) are compositionally biased toward basic and acidic residues. Residues 208–252 (KQTEVDCEHLKRCCERLTRENRRLQREVAELRGTLRTTTSSYPPL) form a leucine-zipper region.

This sequence belongs to the HD-ZIP homeobox family. Class II subfamily. Homodimer. May form a heterodimer with HOX1, HOX2 or HOX3. Expressed in seedlings, roots, leaves, nodes, internodes, flowers and embryo.

The protein localises to the nucleus. Functionally, probable transcription factor that binds to the DNA sequence 5'-CAAT[GC]ATTG-3'. The polypeptide is Homeobox-leucine zipper protein HOX7 (HOX7) (Oryza sativa subsp. japonica (Rice)).